Here is a 216-residue protein sequence, read N- to C-terminus: FGFR1 oncogene partner 2 homolog (216 aa).

2 coiled-coil regions span residues 33–102 (TTTL…LIMS) and 131–185 (SKEL…ITRA). The segment at 193–216 (EDAAESSSHSASSVPNTDLSLRKS) is disordered. Residues 206-216 (VPNTDLSLRKS) are compositionally biased toward polar residues.

Belongs to the SIKE family.

The protein localises to the cytoplasm. The chain is FGFR1 oncogene partner 2 homolog (fgfr1op2) from Xenopus tropicalis (Western clawed frog).